Here is a 587-residue protein sequence, read N- to C-terminus: MARIKKRGTTGNAKNFITRTQAIKKLQISLADFRRLCIFKGIYPREPRNKKKANKGSTAPVTFYYSKDIQYLLHEPVLDKFRQHKTFAKKLQKALGRGEVSDAYKLDQHRPKYTLNHIIKERYPTFADALRDLDDPLNMLFLFANMPATDKVSAKVVSEAEKLCNQWLAYVAKERCLKKVFVSIKGVYYQATVKGQEIRWLIPYKFPTNIPTDVDFRIMLTFLEFYSTLVHFVLYKLYNEAGLIYPPIIEKSIGLSGYVLQDKDAPLKKKEEKNDEEGKNLSKKELNKAIKADQEQQENDEQDNNNGESVEDIELDEFTSTKEDSLLQPSKYASSTAELFSKFIFYIGREVPLDILEFCILSCGGKIISEIAIDDLKINDPEAYKKLNLSNITHQIIDRPKILQKVPGRTYVQPQWVFDSINKQELINVNEYAAGETLPPHLSPWGDAGGYDPNKEVEKEDGEAEEDTDEEEEEVEIEDGDEDQEDEEEEEDEDLKAQKELELEAAGVKFSEINEEDKKSHSKKSKGTSNKEADEEKELKKIMMSNKQKKLFKKMQYGIEKKENREKQLTKKKKQLNKKKEQLKKLN.

A coiled-coil region spans residues leucine 267–asparagine 306. The tract at residues isoleucine 290–glutamate 311 is disordered. The segment covering glutamate 295 to glutamate 311 has biased composition (acidic residues). The BRCT domain maps to serine 335–alanine 434. A disordered region spans residues threonine 437–asparagine 587. Positions lysine 459–aspartate 494 are enriched in acidic residues. Positions glutamate 470–asparagine 587 form a coiled coil. Basic and acidic residues-rich tracts occupy residues serine 529–lysine 541, isoleucine 559–leucine 569, and lysine 578–asparagine 587.

It belongs to the pescadillo family. As to quaternary structure, component of the NOP7 complex, composed of ERB1, NOP7 and YTM1. The complex is held together by ERB1, which interacts with NOP7 via its N-terminal domain and with YTM1 via a high-affinity interaction between the seven-bladed beta-propeller domains of the 2 proteins. The NOP7 complex associates with the 66S pre-ribosome.

Its subcellular location is the nucleus. The protein localises to the nucleolus. It localises to the nucleoplasm. Functionally, component of the NOP7 complex, which is required for maturation of the 25S and 5.8S ribosomal RNAs and formation of the 60S ribosome. Required for the transition from hyphal to yeast growth. This Candida albicans (strain SC5314 / ATCC MYA-2876) (Yeast) protein is Pescadillo homolog.